Here is a 147-residue protein sequence, read N- to C-terminus: Myosin-2 essential light chain (147 aa).

EF-hand domains lie at 7-42, 80-115, and 115-147; these read DQLA…LGQN, DTAD…LGEK, and KLTD…VMSG. Serine 30 is modified (phosphoserine). 5 residues coordinate Ca(2+): aspartate 93, aspartate 95, serine 97, tyrosine 99, and glutamate 104.

Myosin is a hexamer of 2 heavy chains and 4 light chains.

The chain is Myosin-2 essential light chain (Mlc-c) from Drosophila melanogaster (Fruit fly).